A 147-amino-acid chain; its full sequence is Large ribosomal subunit protein uL13 (147 aa).

Belongs to the universal ribosomal protein uL13 family. As to quaternary structure, part of the 50S ribosomal subunit.

In terms of biological role, this protein is one of the early assembly proteins of the 50S ribosomal subunit, although it is not seen to bind rRNA by itself. It is important during the early stages of 50S assembly. This Levilactobacillus brevis (strain ATCC 367 / BCRC 12310 / CIP 105137 / JCM 1170 / LMG 11437 / NCIMB 947 / NCTC 947) (Lactobacillus brevis) protein is Large ribosomal subunit protein uL13.